The chain runs to 349 residues: MKRWSIITGIVIIFCILTCKGQVENKKVDFRTEKGKFVPLNLVPGDVVEYSCPYSLNNDIRNMNGVEREHFDNKKFCFDYIFVGSKLTFLKEYVRGSYNVVHKEEGNLYTSQFSVPPVVLTHRNFDCFCYMEENNVVVKKVLRIHISNGVLRKIPGCDFNADYKESTAITTFSNMSPRRVKVCDVYPKSGDFISLMCPSDYSIKPDGCFSNVYVKRYPNEEVKEEDRFNLNRKWDASKYNVVSIETVLKMNMITQGDKYSIFSKLPDVKDQVDFTCICQSNDEQDNLMMNVYINNTSYLTNNTRSIGVNKHSFSNSEIFERIEREEISFAFSSYLSITLILLYLFFLNF.

The first 21 residues, Met-1–Gly-21, serve as a signal peptide directing secretion. 6-Cys domains are found at residues Gln-22–Gly-149 and Lys-153–Asn-301. Intrachain disulfides connect Cys-77/Cys-127, Cys-157/Cys-183, Cys-197/Cys-278, and Cys-208/Cys-276. Asn-294, Asn-295, and Asn-301 each carry an N-linked (GlcNAc...) asparagine glycan. Asn-315 carries GPI-anchor amidated asparagine lipidation. Positions Ser-316–Phe-349 are cleaved as a propeptide — removed in mature form.

It localises to the cell surface. The protein localises to the cell membrane. This chain is Merozoite surface protein P38 (PFS38), found in Plasmodium falciparum (isolate 3D7).